A 171-amino-acid polypeptide reads, in one-letter code: 3-hydroxydecanoyl-[acyl-carrier-protein] dehydratase (171 aa).

The active site involves H70.

The protein belongs to the thioester dehydratase family. FabA subfamily. Homodimer.

Its subcellular location is the cytoplasm. It carries out the reaction a (3R)-hydroxyacyl-[ACP] = a (2E)-enoyl-[ACP] + H2O. The enzyme catalyses (3R)-hydroxydecanoyl-[ACP] = (2E)-decenoyl-[ACP] + H2O. The catalysed reaction is (2E)-decenoyl-[ACP] = (3Z)-decenoyl-[ACP]. Its pathway is lipid metabolism; fatty acid biosynthesis. In terms of biological role, necessary for the introduction of cis unsaturation into fatty acids. Catalyzes the dehydration of (3R)-3-hydroxydecanoyl-ACP to E-(2)-decenoyl-ACP and then its isomerization to Z-(3)-decenoyl-ACP. Can catalyze the dehydratase reaction for beta-hydroxyacyl-ACPs with saturated chain lengths up to 16:0, being most active on intermediate chain length. The chain is 3-hydroxydecanoyl-[acyl-carrier-protein] dehydratase from Chromohalobacter salexigens (strain ATCC BAA-138 / DSM 3043 / CIP 106854 / NCIMB 13768 / 1H11).